We begin with the raw amino-acid sequence, 369 residues long: Peptide chain release factor 2 (369 aa).

Gln251 is modified (N5-methylglutamine).

It belongs to the prokaryotic/mitochondrial release factor family. Methylated by PrmC. Methylation increases the termination efficiency of RF2.

The protein localises to the cytoplasm. Functionally, peptide chain release factor 2 directs the termination of translation in response to the peptide chain termination codons UGA and UAA. The protein is Peptide chain release factor 2 (prfB) of Thermotoga maritima (strain ATCC 43589 / DSM 3109 / JCM 10099 / NBRC 100826 / MSB8).